Here is a 381-residue protein sequence, read N- to C-terminus: Putative F-box protein At3g17500 (381 aa).

In terms of domain architecture, F-box spans 1–45; it reads MMSNLPLDLVEEILSRVPATSLKRLRSTCKSWNNCYKDQRFTEKH.

The protein is Putative F-box protein At3g17500 of Arabidopsis thaliana (Mouse-ear cress).